The sequence spans 214 residues: Urease accessory protein UreF (214 aa).

Residues 70-95 (AAAGEAGDAETDARTPSPAARAASRA) are disordered. A compositionally biased stretch (low complexity) spans 83-95 (RTPSPAARAASRA).

The protein belongs to the UreF family. As to quaternary structure, ureD, UreF and UreG form a complex that acts as a GTP-hydrolysis-dependent molecular chaperone, activating the urease apoprotein by helping to assemble the nickel containing metallocenter of UreC. The UreE protein probably delivers the nickel.

It is found in the cytoplasm. Its function is as follows. Required for maturation of urease via the functional incorporation of the urease nickel metallocenter. The protein is Urease accessory protein UreF of Mycolicibacterium vanbaalenii (strain DSM 7251 / JCM 13017 / BCRC 16820 / KCTC 9966 / NRRL B-24157 / PYR-1) (Mycobacterium vanbaalenii).